A 445-amino-acid chain; its full sequence is FAS-associated factor 2 (445 aa).

Ala-2 bears the N-acetylalanine mark. Positions 12–48 (EQTEKLLQFQDLTGIESMDQCRHTLEQHNWNIEAAVQ) constitute a UBA domain. Position 167 is an N6-acetyllysine (Lys-167). The stretch at 275-350 (SERLEREERN…EEKERKLECL (76 aa)) forms a coiled coil. The disordered stretch occupies residues 299–361 (ASLRADQEKE…PEPSPDDPES (63 aa)). Basic and acidic residues predominate over residues 303–348 (ADQEKERKKREERERKRRKEEEVQQQKLAEERRRQNLQEEKERKLE). A UBX domain is found at 357-439 (DDPESVKIIF…GLSHTEVLFV (83 aa)).

As to quaternary structure, identified in a complex that contains SEL1L, OS9, FAF2/UBXD8, UBE2J1/UBC6E and AUP1. Interacts with YOD1. Interacts (via N-terminus) with UBQLN2 (via C-terminus). Interacts with PNPLA2 and UBAC2. Interacts with ZFAND2B; probably through VCP. Interacts with LMBR1L. Broadly expressed, with highest levels in brain.

The protein localises to the cytoplasm. It localises to the lipid droplet. The protein resides in the endoplasmic reticulum. Its function is as follows. Plays an important role in endoplasmic reticulum-associated degradation (ERAD) that mediates ubiquitin-dependent degradation of misfolded endoplasmic reticulum proteins. By controlling the steady-state expression of the IGF1R receptor, indirectly regulates the insulin-like growth factor receptor signaling pathway. Involved in inhibition of lipid droplet degradation by binding to phospholipase PNPL2 and inhibiting its activity by promoting dissociation of PNPL2 from its endogenous activator, ABHD5 which inhibits the rate of triacylglycerol hydrolysis. Involved in stress granule disassembly: associates with ubiquitinated G3BP1 in response to heat shock, thereby promoting interaction between ubiquitinated G3BP1 and VCP, followed by G3BP1 extraction from stress granules and stress granule disassembly. In Homo sapiens (Human), this protein is FAS-associated factor 2.